The chain runs to 71 residues: Antimicrobial peptide VpCT4 (71 aa).

The first 23 residues, 1-23 (MKTQFVILIVAIVILQLISQSEA), serve as a signal peptide directing secretion. Leu39 carries the leucine amide modification. Positions 40-71 (GKRGVQNMDQFDDIFEPELSEADLRYLQDLLR) are excised as a propeptide.

The protein belongs to the non-disulfide-bridged peptide (NDBP) superfamily. Short antimicrobial peptide (group 4) family. Expressed by the venom gland.

The protein localises to the secreted. It localises to the target cell membrane. Antimicrobial peptide with potent activity against bacteria S.aureus (MIC=9.3 uM), weak activity against E.coli (MIC&gt;100 uM), and weak activity against pathogenic yeasts C.albicans (MIC=100 uM) and C.glabrata (MIC=100 uM). Is not very effective against P.aeruginosa (MIC&gt;300 uM). Also provokes high hemolysis on human erythrocytes (HC(50)=4.8 uM). In Mesomexovis punctatus (Scorpion), this protein is Antimicrobial peptide VpCT4.